Here is a 103-residue protein sequence, read N- to C-terminus: Large ribosomal subunit protein bL21 (103 aa).

Belongs to the bacterial ribosomal protein bL21 family. Part of the 50S ribosomal subunit. Contacts protein L20.

Functionally, this protein binds to 23S rRNA in the presence of protein L20. This chain is Large ribosomal subunit protein bL21, found in Shewanella woodyi (strain ATCC 51908 / MS32).